The sequence spans 145 residues: Basic phospholipase A2 P'513 (145 aa).

The signal sequence occupies residues 1–21; sequence MYPAHLLLLLAVCVSLLGASA. A propeptide spanning residues 22–27 is cleaved from the precursor; that stretch reads IPPLPL. 7 cysteine pairs are disulfide-bonded: Cys-38–Cys-98, Cys-54–Cys-144, Cys-56–Cys-72, Cys-71–Cys-125, Cys-78–Cys-118, Cys-87–Cys-111, and Cys-105–Cys-116. 3 residues coordinate Ca(2+): Tyr-55, Gly-57, and Gly-59. The active site involves His-75. Asp-76 lines the Ca(2+) pocket. Asp-119 is a catalytic residue.

This sequence belongs to the phospholipase A2 family. Group I subfamily. D49 sub-subfamily. The cofactor is Ca(2+). In terms of tissue distribution, expressed by the venom gland.

The protein resides in the secreted. It carries out the reaction a 1,2-diacyl-sn-glycero-3-phosphocholine + H2O = a 1-acyl-sn-glycero-3-phosphocholine + a fatty acid + H(+). Its function is as follows. PLA2 catalyzes the calcium-dependent hydrolysis of the 2-acyl groups in 3-sn-phosphoglycerides. This chain is Basic phospholipase A2 P'513, found in Laticauda laticaudata (Blue-ringed sea krait).